Reading from the N-terminus, the 390-residue chain is Neutrophil cytosol factor 1 (390 aa).

One can recognise a PX domain in the interval 4 to 125 (TFIRHIALLG…DFFKVRPDDL (122 aa)). SH3 domains follow at residues 156 to 215 (IILQ…PLDS) and 226 to 285 (YAGE…KAGE). Residues 291–390 (QRQIRGRGAP…STKRKLTSAV (100 aa)) form a disordered region. 4 positions are modified to phosphoserine: Ser304, Ser321, Ser329, and Ser346. A compositionally biased stretch (basic and acidic residues) spans 374-383 (ILHRCTESTK).

Component of the phagocyte NADPH oxidase complex composed of an obligatory core heterodimer formed by the membrane proteins CYBA and CYBB and the cytosolic regulatory subunits NCF1/p47-phox, NCF2/p67-phox, NCF4/p40-phox and the small GTPase RAC1 or RAC2. Part of a cytosolic complex composed at least by NCF1, NCF2 and NCF4. Interacts (via C-terminus) with NCF2 (via the C-terminal SH3 domain). Interacts with NCF4. Interacts with CYBB. Interacts (via the second SH3 domain) with CYBA; interaction is phosphorylation-dependent. Interacts with NOXA1. Interacts with ADAM15. Interacts with TRAF4. Interacts with FASLG. Interacts with PARK7 (via C-terminus); the interaction is enhanced by LPS and modulates NCF1 phosphorylation and membrane translocation. In terms of processing, phosphorylated by PRKCD; phosphorylation induces activation of NCF1, leading to assembly and activation of the NADPH oxidase complex.

It is found in the cytoplasm. The protein localises to the cytosol. It localises to the membrane. Functionally, subunit of the phagocyte NADPH oxidase complex that mediates the transfer of electrons from cytosolic NADPH to O2 to produce the superoxide anion (O2(-)). In the activated complex, electrons are first transferred from NADPH to flavin adenine dinucleotide (FAD) and subsequently transferred via two heme molecules to molecular oxygen, producing superoxide through an outer-sphere reaction. Activation of the NADPH oxidase complex is initiated by the assembly of cytosolic subunits of the NADPH oxidase complex with the core NADPH oxidase complex to form a complex at the plasma membrane or phagosomal membrane. This activation process is initiated by phosphorylation dependent binding of the cytosolic NCF1/p47-phox subunit to the C-terminus of CYBA/p22-phox. The polypeptide is Neutrophil cytosol factor 1 (Mus musculus (Mouse)).